The chain runs to 561 residues: Acyl-CoA ligase frbB (561 aa).

ATP contacts are provided by residues 213–221 (TSGTSGAQK), 354–359 (PGWGLT), D437, R456, and K551. The SBD1 stretch occupies residues 284-354 (DLKRVLGSIA…TLRPKWHLQP (71 aa)). The segment at 355-417 (GWGLTEGGGA…MKSPSVIAGY (63 aa)) is SBD2.

Belongs to the ATP-dependent AMP-binding enzyme family.

Its pathway is antifungal biosynthesis. Its function is as follows. Acyl-CoA ligase; part of the gene cluster that mediates the biosynthesis of the antifungal antibiotic FR901469, an inhibitor of beta-1,3-glucansynthase, exerting antifungal activity against the pathogenes Candida albicans and Aspergillus fumigatus. FR901469 is a cyclic depsipeptide containing 12 amino acid residues and a fatty acid chain. The NRPS frbI contains 12 modules responsible for the formation of the depsipeptide backbone which is denoted as Acyl-Thr-Ala-Tyr-Val-4OHPro-Thr-Thr-3OHPro-threo3OHGln-Gly-Thr-Orn-OH (C71H116N14O23). The PKS frbB is probably involved in the production of the hydrocarbon chain, and the acyl-CoA ligase frbC might be involved in the transport of the chain to the peptide ptoduct of frbI. Because FR901469 contains 3 hydroxylated amino acid residues, the 3 oxygenases frbA, frbH, and frbJ might be participating in amino acid hydroxylation. As no thioesterase domains were detected in frbI or frbB, the thioesterases frbD and frbE may instead release and cyclize the products of the NRPS and PKS, respectively. In Dothideomycetidae sp. (strain 11243) (Fungal sp. (strain No.11243)), this protein is Acyl-CoA ligase frbB.